Consider the following 377-residue polypeptide: Histone deacetylase 8 (377 aa).

The histone deacetylase stretch occupies residues 5–336 (RVDVFWHEGM…LHAMLEGVLK (332 aa)). The active-site Proton donor/acceptor is the His145. Residues Asp182, His184, and Asp274 each contribute to the Zn(2+) site.

It belongs to the histone deacetylase family. Zn(2+) is required as a cofactor. Expressed in stems, leaves, flowers, siliques and mature seeds.

The protein resides in the nucleus. Its subcellular location is the cytoplasm. The enzyme catalyses N(6)-acetyl-L-lysyl-[histone] + H2O = L-lysyl-[histone] + acetate. Responsible for the deacetylation of lysine residues on the N-terminal part of the core histones (H2A, H2B, H3 and H4). Histone deacetylation gives a tag for epigenetic repression and plays an important role in transcriptional regulation, cell cycle progression and developmental events. Histone deacetylases act via the formation of large multiprotein complexes. This chain is Histone deacetylase 8, found in Arabidopsis thaliana (Mouse-ear cress).